The chain runs to 351 residues: MSTVVTIPRSVSWKGDAIAVLKQTKLPHSTEYKTLTTIEEVWKSIVMLEVRGAPAIGIVAAFGLALASKKYTTLHIEEFQKKFNRDCNYLGTSRPTAVNLFWAIDRMRESIQEITTIKEAQKILEEEALRIQQEDEAVCRSIGEHALTCFKDGDNILTICNAGSIATARYGTALAPFYIGKEKGVRLHAYACETRPVLQGGRLTTWELKQAGIDVTLITDNTAAHAIQTKEINAIIVGADRIVANGDTANKIGTMNLAILAKYFDIPFYVAAPLSTFDITKQTGAEIVIEERDETEVTKIFGKQVAPVGTTVYNPAFDVTPNKLITGIITEKGIICGDYKREIASLFEKTS.

Residues 51 to 53 (RGA), R94, and Q199 each bind substrate. The Proton donor role is filled by D240. A substrate-binding site is contributed by 250–251 (NK).

The protein belongs to the EIF-2B alpha/beta/delta subunits family. MtnA subfamily. As to quaternary structure, homodimer.

The catalysed reaction is 5-(methylsulfanyl)-alpha-D-ribose 1-phosphate = 5-(methylsulfanyl)-D-ribulose 1-phosphate. The protein operates within amino-acid biosynthesis; L-methionine biosynthesis via salvage pathway; L-methionine from S-methyl-5-thio-alpha-D-ribose 1-phosphate: step 1/6. In terms of biological role, catalyzes the interconversion of methylthioribose-1-phosphate (MTR-1-P) into methylthioribulose-1-phosphate (MTRu-1-P). The protein is Methylthioribose-1-phosphate isomerase of Bacillus thuringiensis (strain Al Hakam).